A 329-amino-acid chain; its full sequence is Cytosolic arginine sensor for mTORC1 subunit 1 (329 aa).

Position 14 is a phosphoserine (S14). 2 consecutive ACT domains span residues 72-138 (AEAT…HTLA) and 260-321 (GELW…EVLQ). Residues 111 to 112 (SV), G274, 280 to 281 (IV), and 300 to 304 (TFNFD) contribute to the L-arginine site.

This sequence belongs to the GATS family. As to quaternary structure, forms homodimers and heterodimers with CASTOR2. Interacts with the GATOR2 complex which is composed of MIOS, SEC13, SEH1L, WDR24 and WDR59; the interaction is negatively regulated by arginine. Interacts with TM4SF5; the interaction is positively regulated by leucine and is negatively regulated by arginine. In terms of processing, phosphorylation at Ser-14 by AKT1, promoting the interaction between CASTOR1 and RNF167. Ubiquitinated by RNF167 via 'Lys-29'-polyubiquitination, leading to its degradation, releasing the GATOR2 complex. Ubiquitination by RNF167 is promoted by phosphorylation at Ser-14 by AKT1.

It is found in the cytoplasm. The protein resides in the cytosol. Its function is as follows. Functions as an intracellular arginine sensor within the amino acid-sensing branch of the TORC1 signaling pathway. As a homodimer or a heterodimer with CASTOR2, binds and inhibits the GATOR subcomplex GATOR2 and thereby mTORC1. Binding of arginine to CASTOR1 allosterically disrupts the interaction of CASTOR1-containing dimers with GATOR2 which can in turn activate mTORC1 and the TORC1 signaling pathway. This chain is Cytosolic arginine sensor for mTORC1 subunit 1, found in Bos taurus (Bovine).